Here is a 669-residue protein sequence, read N- to C-terminus: Probable L-type lectin-domain containing receptor kinase I.2 (669 aa).

A signal peptide spans 1 to 24 (MAQRFYLLLLLLIFLVNLICFSSQ). Topologically, residues 25–295 (QDLSFVFNGF…FTEQKRKRSP (271 aa)) are extracellular. A legume-lectin like region spans residues 26–266 (DLSFVFNGFN…NQYILGWSFS (241 aa)). Residues asparagine 132, asparagine 189, asparagine 212, and asparagine 233 are each glycosylated (N-linked (GlcNAc...) asparagine). A helical membrane pass occupies residues 296–316 (LLIVLLVILTLVVIGGLGGYY). The Cytoplasmic portion of the chain corresponds to 317–669 (LYRRKKYAEV…SHTILNGDGR (353 aa)). The Protein kinase domain occupies 351-609 (FNKDGRLGKG…MQYINRDQAL (259 aa)). ATP contacts are provided by residues 357 to 365 (LGKGGFGEV) and lysine 379. Residue aspartate 475 is the Proton acceptor of the active site.

It in the C-terminal section; belongs to the protein kinase superfamily. Ser/Thr protein kinase family. This sequence in the N-terminal section; belongs to the leguminous lectin family.

The protein resides in the cell membrane. The catalysed reaction is L-seryl-[protein] + ATP = O-phospho-L-seryl-[protein] + ADP + H(+). It catalyses the reaction L-threonyl-[protein] + ATP = O-phospho-L-threonyl-[protein] + ADP + H(+). Functionally, involved in resistance response to the pathogenic fungus Alternaria brassicicola. This Arabidopsis thaliana (Mouse-ear cress) protein is Probable L-type lectin-domain containing receptor kinase I.2.